A 182-amino-acid polypeptide reads, in one-letter code: Chromophore lyase CpcS/CpeS (182 aa).

Belongs to the CpcS/CpeS biliprotein lyase family.

Functionally, covalently attaches a chromophore to Cys residue(s) of phycobiliproteins. The protein is Chromophore lyase CpcS/CpeS of Thermosynechococcus vestitus (strain NIES-2133 / IAM M-273 / BP-1).